Reading from the N-terminus, the 1111-residue chain is Myosin IB heavy chain (1111 aa).

The Myosin motor domain maps to 9 to 691 (QGTDDLVMLP…TVFLLEEALD (683 aa)). Position 102–109 (102–109 (GESGAGKT)) interacts with ATP. Ser-332 carries the phosphoserine modification. Residues 547 to 627 (GSLQKKRPTT…GFAYRNTFDK (81 aa)) form an actin-binding region. In terms of domain architecture, TH1 spans 729-913 (KERQRNSIDR…KGLIGTIASG (185 aa)). The segment at 910–1058 (IASGLPSSTD…PAPQPSRPTA (149 aa)) is disordered. The segment covering 914–928 (LPSSTDSTPKNYNPN) has biased composition (polar residues). Composition is skewed to low complexity over residues 929-944 (SMSQ…QSAG), 952-967 (GAGQ…QQRP), and 991-1012 (PMGA…LPQP). The span at 1017–1040 (GAPGGRGAPMGRGAPGGGPAGAGG) shows a compositional bias: gly residues. The region spanning 1053 to 1111 (PSRPTAKALYDYDASSTDELSFKEGDIIFIVQKDNGGWTQGELKSGQKGWAPTNYLQYN) is the SH3 domain.

The protein belongs to the TRAFAC class myosin-kinesin ATPase superfamily. Myosin family. Myosin I heavy chain is single-headed. Dimer of a heavy and a light chain. Inability to self-assemble into filaments.

It localises to the cell projection. It is found in the pseudopodium. Its subcellular location is the cytoplasm. The protein localises to the cell cortex. In terms of biological role, myosin is a protein that binds to actin and has ATPase activity that is activated by actin. Myosin IB may have a role in chemotaxis and aggregation; it could serve to stabilize and even retract cortical structures, such as pseudopods and lamellopods. Involved in the whole cell motility of aggregation-stages cells. Overexpression results in significant decrease in the rate of cellular translocation and fluid-phase pinocytosis and abnormalities in the normal rearrangement of the actin cytoskeleton. The polypeptide is Myosin IB heavy chain (myoB) (Dictyostelium discoideum (Social amoeba)).